The sequence spans 135 residues: Probable disulfide formation protein (135 aa).

A helical transmembrane segment spans residues 7–26 (SYCLYFAWLVSCIGTLMSVY). A disulfide bridge links Cys-36 with Cys-39. A run of 2 helical transmembrane segments spans residues 41–60 (YQRICLFPLVVILGISAYLD) and 67–84 (YALPLALIGFCIAIYQVC). The cysteines at positions 96 and 101 are disulfide-linked. The helical transmembrane segment at 109 to 131 (GFITMPMASALAFFAIANLLIFA) threads the bilayer.

The protein belongs to the DsbB family. BdbC subfamily.

The protein localises to the cell inner membrane. In terms of biological role, required for disulfide bond formation in some proteins. In Chlamydia muridarum (strain MoPn / Nigg), this protein is Probable disulfide formation protein.